The chain runs to 196 residues: Imidazole glycerol phosphate synthase subunit HisH (196 aa).

The Glutamine amidotransferase type-1 domain occupies 2-196 (NIVIIDTNCS…QQLVKNFLEI (195 aa)). The active-site Nucleophile is C77. Residues H178 and E180 contribute to the active site.

In terms of assembly, heterodimer of HisH and HisF.

It is found in the cytoplasm. The enzyme catalyses 5-[(5-phospho-1-deoxy-D-ribulos-1-ylimino)methylamino]-1-(5-phospho-beta-D-ribosyl)imidazole-4-carboxamide + L-glutamine = D-erythro-1-(imidazol-4-yl)glycerol 3-phosphate + 5-amino-1-(5-phospho-beta-D-ribosyl)imidazole-4-carboxamide + L-glutamate + H(+). It catalyses the reaction L-glutamine + H2O = L-glutamate + NH4(+). Its pathway is amino-acid biosynthesis; L-histidine biosynthesis; L-histidine from 5-phospho-alpha-D-ribose 1-diphosphate: step 5/9. In terms of biological role, IGPS catalyzes the conversion of PRFAR and glutamine to IGP, AICAR and glutamate. The HisH subunit catalyzes the hydrolysis of glutamine to glutamate and ammonia as part of the synthesis of IGP and AICAR. The resulting ammonia molecule is channeled to the active site of HisF. This chain is Imidazole glycerol phosphate synthase subunit HisH, found in Blochmanniella pennsylvanica (strain BPEN).